A 474-amino-acid chain; its full sequence is Protein Rv3254 (474 aa).

Positions 1–4 (MTGR) are excised as a propeptide.

The protein is Protein Rv3254 of Mycobacterium tuberculosis (strain ATCC 25618 / H37Rv).